The sequence spans 423 residues: Large ribosomal subunit protein mL37 (423 aa).

The transit peptide at 1–29 (MALASGPARRALAGSGQLGLGGFGAPRRG) directs the protein to the mitochondrion.

The protein belongs to the mitochondrion-specific ribosomal protein mL37 family. Component of the mitochondrial large ribosomal subunit (mt-LSU). Mature mammalian 55S mitochondrial ribosomes consist of a small (28S) and a large (39S) subunit. The 28S small subunit contains a 12S ribosomal RNA (12S mt-rRNA) and 30 different proteins. The 39S large subunit contains a 16S rRNA (16S mt-rRNA), a copy of mitochondrial valine transfer RNA (mt-tRNA(Val)), which plays an integral structural role, and 52 different proteins. mL37 forms a heterodimer with mL65.

It localises to the mitochondrion. The polypeptide is Large ribosomal subunit protein mL37 (MRPL37) (Homo sapiens (Human)).